Reading from the N-terminus, the 381-residue chain is ELMO domain-containing protein 3 (381 aa).

Positions 1–31 (MNEKSCSFHSKEELRDGQGERLSAGYSPSYD) are disordered. Residues 9–19 (HSKEELRDGQG) are compositionally biased toward basic and acidic residues. One can recognise an ELMO domain in the interval 170 to 324 (VHGRVLQTIY…ELEVLAKKSP (155 aa)).

In terms of tissue distribution, both isoform 1 and isoform 6 are widely expressed.

It is found in the cell projection. The protein resides in the stereocilium. Its subcellular location is the kinocilium. It localises to the cytoplasm. The protein localises to the cytoskeleton. In terms of biological role, acts as a GTPase-activating protein (GAP) for ARL2 with low specific activity. This Homo sapiens (Human) protein is ELMO domain-containing protein 3 (ELMOD3).